The primary structure comprises 337 residues: Glycerol-3-phosphate dehydrogenase [NAD(P)+] (337 aa).

Positions 11, 30, and 113 each coordinate NADPH. Residues lysine 113, glycine 141, and serine 143 each coordinate sn-glycerol 3-phosphate. Alanine 145 contributes to the NADPH binding site. Positions 196, 249, 259, 260, and 261 each coordinate sn-glycerol 3-phosphate. Lysine 196 (proton acceptor) is an active-site residue. Residue arginine 260 coordinates NADPH. NADPH-binding residues include valine 284 and glutamate 286.

The protein belongs to the NAD-dependent glycerol-3-phosphate dehydrogenase family.

It localises to the cytoplasm. It catalyses the reaction sn-glycerol 3-phosphate + NAD(+) = dihydroxyacetone phosphate + NADH + H(+). The catalysed reaction is sn-glycerol 3-phosphate + NADP(+) = dihydroxyacetone phosphate + NADPH + H(+). Its pathway is membrane lipid metabolism; glycerophospholipid metabolism. Catalyzes the reduction of the glycolytic intermediate dihydroxyacetone phosphate (DHAP) to sn-glycerol 3-phosphate (G3P), the key precursor for phospholipid synthesis. The sequence is that of Glycerol-3-phosphate dehydrogenase [NAD(P)+] from Leptothrix cholodnii (strain ATCC 51168 / LMG 8142 / SP-6) (Leptothrix discophora (strain SP-6)).